The sequence spans 149 residues: Small ribosomal subunit protein uS19w (149 aa).

The protein belongs to the universal ribosomal protein uS19 family.

The protein localises to the cytoplasm. This Arabidopsis thaliana (Mouse-ear cress) protein is Small ribosomal subunit protein uS19w (RPS15E).